A 404-amino-acid chain; its full sequence is Imidazolonepropionase (404 aa).

Fe(3+)-binding residues include histidine 70 and histidine 72. Residues histidine 70 and histidine 72 each contribute to the Zn(2+) site. The 4-imidazolone-5-propanoate site is built by arginine 79, tyrosine 142, and histidine 174. Tyrosine 142 contributes to the N-formimidoyl-L-glutamate binding site. Histidine 234 contributes to the Fe(3+) binding site. Position 234 (histidine 234) interacts with Zn(2+). Glutamate 237 is a binding site for 4-imidazolone-5-propanoate. Aspartate 308 lines the Fe(3+) pocket. Aspartate 308 provides a ligand contact to Zn(2+).

This sequence belongs to the metallo-dependent hydrolases superfamily. HutI family. The cofactor is Zn(2+). Fe(3+) is required as a cofactor.

It localises to the cytoplasm. The catalysed reaction is 4-imidazolone-5-propanoate + H2O = N-formimidoyl-L-glutamate. The protein operates within amino-acid degradation; L-histidine degradation into L-glutamate; N-formimidoyl-L-glutamate from L-histidine: step 3/3. Catalyzes the hydrolytic cleavage of the carbon-nitrogen bond in imidazolone-5-propanoate to yield N-formimidoyl-L-glutamate. It is the third step in the universal histidine degradation pathway. This chain is Imidazolonepropionase, found in Thermoplasma volcanium (strain ATCC 51530 / DSM 4299 / JCM 9571 / NBRC 15438 / GSS1).